A 262-amino-acid chain; its full sequence is GTP cyclohydrolase 1 type 2 homolog (262 aa).

Residues His64, His65, Asp103, His224, and Glu228 each contribute to the a divalent metal cation site.

The protein belongs to the GTP cyclohydrolase I type 2/NIF3 family. As to quaternary structure, homohexamer.

This Clostridium perfringens (strain 13 / Type A) protein is GTP cyclohydrolase 1 type 2 homolog.